A 186-amino-acid chain; its full sequence is RNA-free ribonuclease P (186 aa).

Belongs to the HARP family.

It carries out the reaction Endonucleolytic cleavage of RNA, removing 5'-extranucleotides from tRNA precursor.. Its function is as follows. RNA-free RNase P that catalyzes the removal of the 5'-leader sequence from pre-tRNA to produce the mature 5'-terminus. In Hydrogenobaculum sp. (strain Y04AAS1), this protein is RNA-free ribonuclease P.